The sequence spans 311 residues: Formimidoylglutamase (311 aa).

6 residues coordinate Mn(2+): H122, D151, H153, D155, C242, and D244.

This sequence belongs to the arginase family. Mn(2+) is required as a cofactor.

The enzyme catalyses N-formimidoyl-L-glutamate + H2O = formamide + L-glutamate. The protein operates within amino-acid degradation; L-histidine degradation into L-glutamate; L-glutamate from N-formimidoyl-L-glutamate (hydrolase route): step 1/1. Functionally, catalyzes the conversion of N-formimidoyl-L-glutamate to L-glutamate and formamide. The polypeptide is Formimidoylglutamase (Pseudomonas aeruginosa (strain UCBPP-PA14)).